Here is a 362-residue protein sequence, read N- to C-terminus: Probable cysteine protease RDL2 (362 aa).

Positions 1-28 (MAATPIRVIVSALVILSVLLLSSSLGVA) are cleaved as a signal peptide. Residues 29–129 (TETEIERNET…ERYLYKEGDV (101 aa)) constitute a propeptide, activation peptide. Residue N36 is glycosylated (N-linked (GlcNAc...) asparagine). Cystine bridges form between C151–C194 and C185–C228. C154 is a catalytic residue. N-linked (GlcNAc...) asparagine glycosylation occurs at N234. C287 and C338 are oxidised to a cystine. Active-site residues include H293 and N313.

It belongs to the peptidase C1 family.

Probable thiol protease. This is Probable cysteine protease RDL2 from Arabidopsis thaliana (Mouse-ear cress).